Reading from the N-terminus, the 103-residue chain is Iron-sulfur cluster assembly protein CyaY (103 aa).

The protein belongs to the frataxin family.

In terms of biological role, involved in iron-sulfur (Fe-S) cluster assembly. May act as a regulator of Fe-S biogenesis. The protein is Iron-sulfur cluster assembly protein CyaY of Rickettsia rickettsii (strain Iowa).